Consider the following 247-residue polypeptide: tRNA (guanine-N(1)-)-methyltransferase (247 aa).

S-adenosyl-L-methionine-binding positions include Gly115 and 134–139; that span reads IGDFVL.

It belongs to the RNA methyltransferase TrmD family. Homodimer.

It localises to the cytoplasm. The catalysed reaction is guanosine(37) in tRNA + S-adenosyl-L-methionine = N(1)-methylguanosine(37) in tRNA + S-adenosyl-L-homocysteine + H(+). Specifically methylates guanosine-37 in various tRNAs. In Anaeromyxobacter dehalogenans (strain 2CP-C), this protein is tRNA (guanine-N(1)-)-methyltransferase.